The chain runs to 516 residues: Flavonoid-6-hydroxylase (516 aa).

Residues 3–23 (FNAAVCAALAFISLLSYYLIW) traverse the membrane as a helical segment. Cys455 lines the heme pocket.

It belongs to the cytochrome P450 family. Heme serves as cofactor.

Its subcellular location is the membrane. The enzyme catalyses genkwanin + reduced [NADPH--hemoprotein reductase] + O2 = scutellarein 7-methyl ether + oxidized [NADPH--hemoprotein reductase] + H2O. It carries out the reaction (2S)-sakuranetin + reduced [NADPH--hemoprotein reductase] + O2 = (2S)-7-methylcarthamidin + oxidized [NADPH--hemoprotein reductase] + H2O + H(+). The catalysed reaction is apigenin 4',7-dimethyl ether + reduced [NADPH--hemoprotein reductase] + O2 = ladanein + oxidized [NADPH--hemoprotein reductase] + H2O + H(+). It catalyses the reaction (2S)-naringenin 4',7-dimethyl ether + reduced [NADPH--hemoprotein reductase] + O2 = (2S)-carthamidin-4',7-dimethyl ether + oxidized [NADPH--hemoprotein reductase] + H2O + H(+). It participates in flavonoid metabolism. In terms of biological role, 6-OH hydroxylase involved in the biosynthesis of polymethoxylated flavonoids natural products such as pebrellin, aroma compounds which contribute to the flavor of peppermint, and exhibit pharmacological activities such as anti-allergic, anti-oxidant, antibacterial, anti-proliferative, and anti-inflammatory effects. Catalyzes the 6-hydroxylation of 7-O-methylated precursors such as the conversion of genkwanin (GENK) to scutellarein-7-methyl ether (SCU7Me). Can also use apigenin-7,4'-dimethyl ether (AdM), naringenin-7-methyl ether (SAK) and naringenin-7,4'-dimethyl ether (NdM) as substrates. This Mentha piperita (Peppermint) protein is Flavonoid-6-hydroxylase.